We begin with the raw amino-acid sequence, 461 residues long: Argininosuccinate lyase (461 aa).

Belongs to the lyase 1 family. Argininosuccinate lyase subfamily.

Its subcellular location is the cytoplasm. It carries out the reaction 2-(N(omega)-L-arginino)succinate = fumarate + L-arginine. Its pathway is amino-acid biosynthesis; L-arginine biosynthesis; L-arginine from L-ornithine and carbamoyl phosphate: step 3/3. The chain is Argininosuccinate lyase from Nitrosomonas eutropha (strain DSM 101675 / C91 / Nm57).